The chain runs to 523 residues: Sugar carrier protein C (523 aa).

Residues 1 to 25 (MPAVGGIPPSGGNRKVYPGNLTLYV) are Cytoplasmic-facing. 12 consecutive transmembrane segments (helical) span residues 26–46 (TVTC…IGIS), 86–106 (MFTS…STIT), 120–140 (VLFC…MLIL), 143–163 (ILLG…LSEM), 172–192 (LNIG…VLNY), 205–225 (LSLG…LVLP), 298–320 (LTGI…FGSD), 327–347 (VITG…VDKW), 351–371 (FLFL…AACI), 387–407 (WYAV…AWSW), 433–453 (SVNM…LCHL), and 456–476 (GLFI…YYFL). Residues 477–523 (PETKGIPIEEMGQVWKQHWYWSRYVVDEDYPNGGLEMGKEGRIPKNV) are Cytoplasmic-facing.

The protein belongs to the major facilitator superfamily. Sugar transporter (TC 2.A.1.1) family.

The protein resides in the membrane. This Ricinus communis (Castor bean) protein is Sugar carrier protein C (STC).